Here is a 145-residue protein sequence, read N- to C-terminus: MSTIRLREFVERRPSIPPRLYITHQGRDIKGYYPGQLARLHFDYSGRKAPRPLIDLTIPLKSTTPYQPQLDQQTLIRSICSRRLSRPTDLWHNETSYQRDYSLPFYESGWDRKLGTISLHPRPVNSVPEVYCCGGERSSYARSTF.

This is Protein SPMIP3 from Mus musculus (Mouse).